The sequence spans 238 residues: Large ribosomal subunit protein uL1 (238 aa).

Belongs to the universal ribosomal protein uL1 family. Part of the 50S ribosomal subunit.

Binds directly to 23S rRNA. The L1 stalk is quite mobile in the ribosome, and is involved in E site tRNA release. In terms of biological role, protein L1 is also a translational repressor protein, it controls the translation of the L11 operon by binding to its mRNA. The polypeptide is Large ribosomal subunit protein uL1 (Frankia alni (strain DSM 45986 / CECT 9034 / ACN14a)).